A 589-amino-acid chain; its full sequence is Bifunctional protein TrpGD (589 aa).

The Glutamine amidotransferase type-1 domain maps to 46–241 (RVIVIDNYDS…LNIQDIQVKK (196 aa)). L-glutamine is bound at residue 99-101 (GPG). Residue Cys126 is the Nucleophile; for GATase activity of the active site. Residues Gln130 and 176–177 (SL) each bind L-glutamine. Active-site for GATase activity residues include His215 and Glu217. The interval 253-589 (ALKKLVEFED…MDYQKTLGNS (337 aa)) is anthranilate phosphoribosyltransferase.

In the C-terminal section; belongs to the anthranilate phosphoribosyltransferase family. Heterotetramer consisting of two non-identical subunits: a beta subunit (TrpG) and a large alpha subunit (TrpE).

It catalyses the reaction chorismate + L-glutamine = anthranilate + pyruvate + L-glutamate + H(+). The catalysed reaction is N-(5-phospho-beta-D-ribosyl)anthranilate + diphosphate = 5-phospho-alpha-D-ribose 1-diphosphate + anthranilate. The protein operates within amino-acid biosynthesis; L-tryptophan biosynthesis; L-tryptophan from chorismate: step 1/5. Its pathway is amino-acid biosynthesis; L-tryptophan biosynthesis; L-tryptophan from chorismate: step 2/5. In terms of biological role, part of a heterotetrameric complex that catalyzes the two-step biosynthesis of anthranilate, an intermediate in the biosynthesis of L-tryptophan. In the first step, the glutamine-binding beta subunit (TrpG) of anthranilate synthase (AS) provides the glutamine amidotransferase activity which generates ammonia as a substrate that, along with chorismate, is used in the second step, catalyzed by the large alpha subunit of AS (TrpE) to produce anthranilate. In the absence of TrpG, TrpE can synthesize anthranilate directly from chorismate and high concentrations of ammonia. In addition to synthesizing anthranilate, it also catalyzes the second step of the pathway, the transfer of the phosphoribosyl group of 5-phosphorylribose-1-pyrophosphate (PRPP) to anthranilate. This Thermotoga maritima (strain ATCC 43589 / DSM 3109 / JCM 10099 / NBRC 100826 / MSB8) protein is Bifunctional protein TrpGD (trpGD).